The chain runs to 890 residues: V-type proton ATPase subunit a, Golgi isoform (890 aa).

N-acetylmethionine is present on methionine 1. Topologically, residues 1–450 are cytoplasmic; the sequence is MNQEEAIFRS…DAYGIATYKE (450 aa). Residues 113 to 154 are a coiled coil; the sequence is LENVNDMVKEITDCESRARQLDESLDSLRSKLNDLLEQRQVI. A phosphoserine mark is found at serine 223 and serine 228. Residues 297-347 adopt a coiled-coil conformation; the sequence is LKKVKRVIDSLNGKIVSLNTRSSELVDTLNRQIDDLQRILDTTEQTLHTEL. A helical membrane pass occupies residues 451–469; sequence INAGLATVVTFPFMFAIMF. The Vacuolar segment spans residues 470 to 471; the sequence is GD. A helical transmembrane segment spans residues 472 to 488; it reads MGHGFILFLMALFLVLN. The Cytoplasmic segment spans residues 489–502; sequence ERKFGAMHRDEIFD. The helical transmembrane segment at 503-532 threads the bilayer; sequence MAFTGRYVLLLMGAFSVYTGLLYNDIFSKS. Over 533–580 the chain is Vacuolar; sequence MTIFKSGWQWPSTFRKGESIEAKKTGVYPFGLDFAWHGTDNGLLFSNS. A helical transmembrane segment spans residues 581 to 600; it reads YKMKLSILMGYAHMTYSFMF. Residues 601–618 lie on the Cytoplasmic side of the membrane; sequence SYINYRAKNSKVDIIGNF. A helical transmembrane segment spans residues 619 to 639; sequence IPGLVFMQSIFGYLSWAIVYK. The Vacuolar segment spans residues 640–682; the sequence is WSKDWIKDDKPAPGLLNMLINMFLAPGTIDDQLYSGQAKLQVV. A helical membrane pass occupies residues 683–702; that stretch reads LLLAALVCVPWLLLYKPLTL. Over 703–779 the chain is Cytoplasmic; the sequence is RRLNKNGGGG…DVMIHQVIHT (77 aa). The chain crosses the membrane as a helical span at residues 780–804; that stretch reads IEFCLNCISHTASYLRLWALSLAHA. At 805–828 the chain is on the vacuolar side; sequence QLSSVLWDMTISNAFSSKNSGSPL. The helical transmembrane segment at 829–867 threads the bilayer; sequence AVMKVVFLFAMWFVLTVCILVFMEGTSAMLHALRLHWVE. Residues 868–890 lie on the Cytoplasmic side of the membrane; the sequence is AMSKFFEGEGYAYEPFSFRAIIE.

Belongs to the V-ATPase 116 kDa subunit family. V-ATPase is a heteromultimeric enzyme composed of a peripheral catalytic V1 complex (components A to H) attached to an integral membrane V0 proton pore complex (components: a, c, c', c'', d, e, f and VOA1). Glycosylated.

The protein resides in the endosome membrane. Its subcellular location is the golgi apparatus membrane. In terms of biological role, subunit of the V0 complex of vacuolar(H+)-ATPase (V-ATPase), a multisubunit enzyme composed of a peripheral complex (V1) that hydrolyzes ATP and a membrane integral complex (V0) that translocates protons. V-ATPase is responsible for acidifying and maintaining the pH of intracellular compartments. Is present only in Golgi- and endosome-residing V-ATPase complexes; enzymes containing this subunit have a 4-fold lower ratio of proton transport to ATP hydrolysis than complexes containing the vacuolar isoform and do not dissociate V1 and V0 in response to glucose depletion. This chain is V-type proton ATPase subunit a, Golgi isoform (STV1), found in Saccharomyces cerevisiae (strain ATCC 204508 / S288c) (Baker's yeast).